Consider the following 282-residue polypeptide: MPLFGAHMSAAGGVSNAIRDIVEIGGEVLQLFTANQRQWTPKAPSAADVEAFRRRRAAFGGPVFSHASYLINIANGDGAASAKAVEALVREFERCTALGVDAVVLHPGAHLGAGRGAGILRAARNIDEVFDRCGGQTPALLLENTAGQGTCLGGGLNDLAEIIDASRHASQLGVCLDTAHAFGAGYALHTDEGYRRCMEDIEYGPGLAAVRLFHVNDSLVPCGSRKDRHTHIGEGQLGEAAFVRLLNDPVFAMHPMVLETPKEDGHAADRRNLATLRRLAGR.

Positions 66, 106, 143, 177, 180, 214, 227, 229, and 259 each coordinate Zn(2+).

It belongs to the AP endonuclease 2 family. The cofactor is Zn(2+).

The catalysed reaction is Endonucleolytic cleavage to 5'-phosphooligonucleotide end-products.. In terms of biological role, endonuclease IV plays a role in DNA repair. It cleaves phosphodiester bonds at apurinic or apyrimidinic (AP) sites, generating a 3'-hydroxyl group and a 5'-terminal sugar phosphate. This chain is Probable endonuclease 4, found in Nitratidesulfovibrio vulgaris (strain DP4) (Desulfovibrio vulgaris).